The following is a 281-amino-acid chain: Transcription factor E2F6 (281 aa).

A Glycyl lysine isopeptide (Lys-Gly) (interchain with G-Cter in SUMO2) cross-link involves residue lysine 9. Residues 50–129 (YVSMRKALKV…SKNHIRWIGS (80 aa)) mediate DNA binding. Residues 95 to 129 (KLGVRKRRVYDITNVLDGIDLVEKKSKNHIRWIGS) carry the DEF box motif. The tract at residues 130–222 (DLSNFGAVPQ…PAPREDSITV (93 aa)) is dimerization. Residues 143 to 164 (LQEELSDLSAMEDALDELIKDC) form a leucine-zipper region. The segment at 173-281 (DDKENERLAY…QSEELLEVSN (109 aa)) is transcription repression. Residues 241–281 (GQTSNKRSEGVGTSSSESTHPEGPEEEENPQQSEELLEVSN) are disordered.

It belongs to the E2F/DP family. As to quaternary structure, forms heterodimers with DP family members TFDP1 or TFDP2. Component of the DRTF1/E2F transcription factor complex. Part of the E2F6.com-1 complex in G0 phase composed of E2F6, MGA, MAX, TFDP1, CBX3, BAT8, EUHMTASE1, RING1, RNF2, MBLR, L3MBTL2 and YAF2. Component of some MLL1/MLL complex, at least composed of the core components KMT2A/MLL1, ASH2L, HCFC1/HCF1, WDR5 and RBBP5, as well as the facultative components BACC1, CHD8, E2F6, HSP70, INO80C, KANSL1, LAS1L, MAX, MCRS1, MGA, KAT8/MOF, PELP1, PHF20, PRP31, RING2, RUVB1/TIP49A, RUVB2/TIP49B, SENP3, TAF1, TAF4, TAF6, TAF7, TAF9 and TEX10. As to expression, expressed in all tissues examined. Highest levels in placenta, skeletal muscle, heart, ovary, kidney, small intestine and spleen.

It is found in the nucleus. In terms of biological role, inhibitor of E2F-dependent transcription. Binds DNA cooperatively with DP proteins through the E2 recognition site, 5'-TTTC[CG]CGC-3'. Has a preference for the 5'-TTTCCCGC-3' E2F recognition site. E2F6 lacks the transcriptional activation and pocket protein binding domains. Appears to regulate a subset of E2F-dependent genes whose products are required for entry into the cell cycle but not for normal cell cycle progression. Represses expression of some meiosis-specific genes, including SLC25A31/ANT4. May silence expression via the recruitment of a chromatin remodeling complex containing histone H3-K9 methyltransferase activity. Overexpression delays the exit of cells from the S-phase. The polypeptide is Transcription factor E2F6 (Homo sapiens (Human)).